Here is a 229-residue protein sequence, read N- to C-terminus: Probable endo-1,4-beta-xylanase A (229 aa).

Positions 1-18 (MVSFKYLFLAASALGALA) are cleaved as a signal peptide. 2 N-linked (GlcNAc...) asparagine glycosylation sites follow: N30 and N100. The 189-residue stretch at 41 to 229 (AGTPSSTGWN…SSGSSSITVY (189 aa)) folds into the GH11 domain. E125 functions as the Nucleophile in the catalytic mechanism. E216 functions as the Proton donor in the catalytic mechanism.

Belongs to the glycosyl hydrolase 11 (cellulase G) family.

It is found in the secreted. It catalyses the reaction Endohydrolysis of (1-&gt;4)-beta-D-xylosidic linkages in xylans.. Its pathway is glycan degradation; xylan degradation. Functionally, endo-1,4-beta-xylanase involved in the hydrolysis of xylan, a major structural heterogeneous polysaccharide found in plant biomass representing the second most abundant polysaccharide in the biosphere, after cellulose. This chain is Probable endo-1,4-beta-xylanase A (xlnA), found in Aspergillus clavatus (strain ATCC 1007 / CBS 513.65 / DSM 816 / NCTC 3887 / NRRL 1 / QM 1276 / 107).